The primary structure comprises 311 residues: Formimidoylglutamase (311 aa).

Mn(2+) is bound by residues His-130, Asp-155, His-157, Asp-159, Cys-242, and Asp-244.

It belongs to the arginase family. Requires Mn(2+) as cofactor.

The catalysed reaction is N-formimidoyl-L-glutamate + H2O = formamide + L-glutamate. It participates in amino-acid degradation; L-histidine degradation into L-glutamate; L-glutamate from N-formimidoyl-L-glutamate (hydrolase route): step 1/1. Its function is as follows. Catalyzes the conversion of N-formimidoyl-L-glutamate to L-glutamate and formamide. This chain is Formimidoylglutamase, found in Staphylococcus aureus (strain MSSA476).